A 159-amino-acid polypeptide reads, in one-letter code: Putative ribosomal RNA large subunit methyltransferase H (159 aa).

Residues L76, G108, and 127–132 (FSKMTF) each bind S-adenosyl-L-methionine.

The protein belongs to the RNA methyltransferase RlmH family.

The protein localises to the cytoplasm. It carries out the reaction pseudouridine(1915) in 23S rRNA + S-adenosyl-L-methionine = N(3)-methylpseudouridine(1915) in 23S rRNA + S-adenosyl-L-homocysteine + H(+). In terms of biological role, specifically methylates the pseudouridine at position 1915 (m3Psi1915) in 23S rRNA. The polypeptide is Putative ribosomal RNA large subunit methyltransferase H (Methanococcus vannielii (strain ATCC 35089 / DSM 1224 / JCM 13029 / OCM 148 / SB)).